A 668-amino-acid chain; its full sequence is MTLYDENNLHIIKDNLRYLKLLSKQYPSISSASSEIINLQAILNLPKGTEHFISDVHGEYESFTHMLKNASGVIKRKIDDVFGTSLRECDKKNLATLIYYPEQKLDLIKKSEKNLEDWYKITLYRLIRLCQIVSSKYTRSKVRKSLPSDFAYIIEELLNEQGDRVDKQEYYNSIIETIIDIDRASEFIIAISNVIQRLVVDKLHIIGDIYDRGPGAEIIIEALSKHHSIDIQWGNHDIVWMGAAAGCEACIANVIRISLRYANLSTLEDGYGINLLPLATFAMDFYKEDNCENFKPRTIDKNLNETDIKLLSKMHKAISIIQFKLEGKIIKRRPEFKMEERLLLDKINIKEGTLNLNEKIYKLIDTNFPTLDKENPYELNERERDLVEKLTNSFINSEKLQRHIKFLYSNGSLYLKYNSNLLYHGCIPLNDDGSLKEVTLCKETLKGKSLLDKLDRLAREAYFFKKDPESKLYGMDMMWYLWCGPNSPLFGKKKMTTFERYFLDDKNTHKEEKNPYYKYRNNEKMCTMIFEEFELDADNSHIINGHIPVKTKEGENPIKANGKLLVIDGGFCKAYQPQTGIAGYTLIYNSYGLLLTSHEPFSSIHKAIVEGNDILSSTTILEHVSSRKRVLDTDSGEEIKKQIHDLEMLLVAYRKGLIKEENEANIRF.

It belongs to the FBPase class 3 family. Mn(2+) serves as cofactor.

The catalysed reaction is beta-D-fructose 1,6-bisphosphate + H2O = beta-D-fructose 6-phosphate + phosphate. The protein operates within carbohydrate biosynthesis; gluconeogenesis. The protein is Fructose-1,6-bisphosphatase class 3 of Clostridium botulinum (strain 657 / Type Ba4).